A 539-amino-acid chain; its full sequence is uncharacterized protein (539 aa).

Transmembrane regions (helical) follow at residues 4–22 (LVEN…GLLL), 27–46 (IFGF…ALST), 56–78 (LIYV…PGFF), 90–112 (ALTL…VLNI), and 155–177 (PVVA…IAIF). RCK C-terminal domains follow at residues 187 to 269 (KEAE…AIGE) and 271 to 352 (IDGD…LLGD). Helical transmembrane passes span 360–382 (FNLL…EFPL), 422–444 (LALR…GAGF), 453–475 (SLTI…LFVG), and 516–538 (YTSV…LFLL).

The protein belongs to the AAE transporter (TC 2.A.81) family.

It localises to the cell membrane. This is an uncharacterized protein from Corynebacterium glutamicum (strain ATCC 13032 / DSM 20300 / JCM 1318 / BCRC 11384 / CCUG 27702 / LMG 3730 / NBRC 12168 / NCIMB 10025 / NRRL B-2784 / 534).